The primary structure comprises 103 residues: Methanol dehydrogenase [cytochrome c] subunit 2 (103 aa).

Residues 1–20 (MKRILTLTVAALALGTPALA) form the signal peptide. An intrachain disulfide couples C26 to C32.

Belongs to the methanol dehydrogenase subunit 2 family. Heterotetramer composed of 2 alpha and 2 beta subunits.

Its subcellular location is the periplasm. The catalysed reaction is 2 Fe(III)-[cytochrome cL] + a primary alcohol = 2 Fe(II)-[cytochrome cL] + an aldehyde + 2 H(+). In terms of biological role, catalyzes the oxidation of primary alcohols including methanol. This is Methanol dehydrogenase [cytochrome c] subunit 2 (moxI) from Paracoccus denitrificans.